We begin with the raw amino-acid sequence, 319 residues long: Quinolinate synthase (319 aa).

Iminosuccinate is bound by residues histidine 34 and serine 51. Cysteine 96 serves as a coordination point for [4Fe-4S] cluster. Residues 122 to 124 (YIN) and serine 139 contribute to the iminosuccinate site. Residue cysteine 182 coordinates [4Fe-4S] cluster. Iminosuccinate is bound by residues 208 to 210 (HPE) and threonine 225. Residue cysteine 276 coordinates [4Fe-4S] cluster.

The protein belongs to the quinolinate synthase family. Type 2 subfamily. Requires [4Fe-4S] cluster as cofactor.

Its subcellular location is the cytoplasm. The catalysed reaction is iminosuccinate + dihydroxyacetone phosphate = quinolinate + phosphate + 2 H2O + H(+). The protein operates within cofactor biosynthesis; NAD(+) biosynthesis; quinolinate from iminoaspartate: step 1/1. In terms of biological role, catalyzes the condensation of iminoaspartate with dihydroxyacetone phosphate to form quinolinate. The polypeptide is Quinolinate synthase (Thermosynechococcus vestitus (strain NIES-2133 / IAM M-273 / BP-1)).